A 440-amino-acid polypeptide reads, in one-letter code: FAD-dependent monooxygenase afoD (440 aa).

Residues 10-30 (PLSIAIIGGGIIGLMTALGLL) traverse the membrane as a helical segment. The FAD site is built by Glu-41, Leu-145, and Asp-320. Asn-352 is a glycosylation site (N-linked (GlcNAc...) asparagine).

This sequence belongs to the paxM FAD-dependent monooxygenase family. FAD serves as cofactor.

The protein localises to the membrane. Functionally, FAD-dependent monooxygenase; part of the gene cluster that mediates the biosynthesis of asperfuranone, a probable antitumor agent. The polyketide synthase afoG is responsible for producing the 3,5-dimethyloctadienone moiety from acetyl-CoA, three malonyl-CoA, and two S-adenosyl methionines (SAM). The 3,5-dimethyloctadienone moiety is then loaded onto the SAT domain of afoE and extended with four malonyl-CoA and one SAM, which leads to the formation of 2,4-dihydroxy-6-(5,7-dimethyl-2-oxo-trans-3-trans-5-nonadienyl)-3-methylbenzaldehyde (compound 2) after reductive release and aldol condensation. AfoD is the next enzyme in the biosynthesis sequence and hydroxylates the side chain at the benzylic position of compound 2. After benzylic hydroxylation, a furan ring is formed after five-member ring hemiacetal formation and water elimination. AfoF and afoC are proposed to oxidize the R-diketone proton and to reduce the unconjugated carbonyl group, respectively, to generate asperfuranone. Since no intermediates could be isolated from afoF and afoC deletants, the sequence of these two enzymes is not fully understood. Moreover, since afoC deletant still produces a small amount of asperfuranone, other endogenous oxidoreductases might catalyze the same reaction with much less efficiency. The polypeptide is FAD-dependent monooxygenase afoD (Emericella nidulans (strain FGSC A4 / ATCC 38163 / CBS 112.46 / NRRL 194 / M139) (Aspergillus nidulans)).